The chain runs to 478 residues: Sugar transporter ERD6-like 18 (478 aa).

The next 12 membrane-spanning stretches (helical) occupy residues Ile31–Val51, Ile71–Phe91, Leu110–Phe130, Ile133–Ile153, Phe162–Ser180, Ile188–Pro208, Thr270–Leu290, Ile306–Val326, Pro333–Phe353, Val367–Leu387, Ile407–Leu427, and Gly433–Val453.

Belongs to the major facilitator superfamily. Sugar transporter (TC 2.A.1.1) family. Expressed in leaf vasculature, stem and flowers.

Its subcellular location is the membrane. Functionally, sugar transporter. This Arabidopsis thaliana (Mouse-ear cress) protein is Sugar transporter ERD6-like 18 (SFP2).